Consider the following 380-residue polypeptide: Actinidain (380 aa).

Residues 1-24 form the signal peptide; it reads MGLPKSFVSMSLLFFSTLLILSLA. A propeptide spans 25–126 (activation peptide); that stretch reads FNAKNLTQRT…NQYEPRVGQV (102 aa). Disulfide bonds link C148/C191, C182/C224, and C282/C332. C151 is a catalytic residue. C151 is an E64 binding site. Active-site residues include H288 and N308.

Belongs to the peptidase C1 family. As to expression, fruit.

The enzyme catalyses Specificity close to that of papain.. Repressed by the active-site-directed cysteine protease inhibitor E64 (L-trans-epoxysuccinyl-leucylamide-(4-guanido)-butane) produced by Aspergillus japonicus. Functionally, cysteine protease responsible for the cleavage of kiwellin into kissper and KiTH. The sequence is that of Actinidain from Actinidia chinensis var. chinensis (Chinese soft-hair kiwi).